The following is a 233-amino-acid chain: UPF0173 metal-dependent hydrolase Acid345_3437 (233 aa).

The protein belongs to the UPF0173 family.

This chain is UPF0173 metal-dependent hydrolase Acid345_3437, found in Koribacter versatilis (strain Ellin345).